Consider the following 178-residue polypeptide: ATP-dependent protease subunit HslV (178 aa).

Residue Thr-5 is part of the active site. Gly-161, Cys-164, and Thr-167 together coordinate Na(+).

It belongs to the peptidase T1B family. HslV subfamily. As to quaternary structure, a double ring-shaped homohexamer of HslV is capped on each side by a ring-shaped HslU homohexamer. The assembly of the HslU/HslV complex is dependent on binding of ATP.

Its subcellular location is the cytoplasm. The enzyme catalyses ATP-dependent cleavage of peptide bonds with broad specificity.. Allosterically activated by HslU binding. Functionally, protease subunit of a proteasome-like degradation complex believed to be a general protein degrading machinery. In Nitratiruptor sp. (strain SB155-2), this protein is ATP-dependent protease subunit HslV.